Consider the following 164-residue polypeptide: Thiol peroxidase (164 aa).

The Thioredoxin domain maps to 18–163; sequence VNEGDIAPNF…FEAALKAYRN (146 aa). The active-site Cysteine sulfenic acid (-SOH) intermediate is the cysteine 60. Cysteines 60 and 93 form a disulfide.

This sequence belongs to the peroxiredoxin family. Tpx subfamily. As to quaternary structure, homodimer.

It carries out the reaction a hydroperoxide + [thioredoxin]-dithiol = an alcohol + [thioredoxin]-disulfide + H2O. Its function is as follows. Thiol-specific peroxidase that catalyzes the reduction of hydrogen peroxide and organic hydroperoxides to water and alcohols, respectively. Plays a role in cell protection against oxidative stress by detoxifying peroxides. The sequence is that of Thiol peroxidase from Staphylococcus epidermidis (strain ATCC 35984 / DSM 28319 / BCRC 17069 / CCUG 31568 / BM 3577 / RP62A).